We begin with the raw amino-acid sequence, 558 residues long: Hepatocyte nuclear factor 1-beta (558 aa).

A dimerization region spans residues 1–31 (MVSKLTSLQQELLSALLSSGVTKEVLIQALE). An HNF-p1 domain is found at 1–32 (MVSKLTSLQQELLSALLSSGVTKEVLIQALEE). Phosphoserine occurs at positions 49, 52, 75, and 80. The segment at 66–85 (TNGHAKGRLSGDEGSEDGDD) is disordered. In terms of domain architecture, POU-specific atypical spans 93–188 (KELQALNTEE…ILRQFNQTVQ (96 aa)). Positions 231 to 311 (MRRNRFKWGP…NRRKEEAFRQ (81 aa)) form a DNA-binding region, homeobox; HNF1-type. A disordered region spans residues 323–348 (THNLNPLLTHGSPHHQPSSSPPNKMS).

This sequence belongs to the HNF1 homeobox family. In terms of assembly, binds DNA as a dimer. Can form homodimer or heterodimer with HNF1-alpha. Interacts (via HNF-p1 domain) with PCBD1; the interaction increases its transactivation activity.

The protein localises to the nucleus. Its function is as follows. Transcription factor that binds to the inverted palindrome 5'-GTTAATNATTAAC-3'. Binds to the FPC element in the cAMP regulatory unit of the PLAU gene. Transcriptional activity is increased by coactivator PCBD1. The polypeptide is Hepatocyte nuclear factor 1-beta (Hnf1b) (Mus musculus (Mouse)).